Reading from the N-terminus, the 349-residue chain is Glycerol-3-phosphate dehydrogenase [NAD(P)+] (349 aa).

NADPH contacts are provided by serine 12, tryptophan 13, and lysine 107. The sn-glycerol 3-phosphate site is built by lysine 107, glycine 138, and serine 140. NADPH is bound at residue alanine 142. Sn-glycerol 3-phosphate-binding residues include lysine 193, aspartate 246, serine 256, arginine 257, and asparagine 258. Lysine 193 (proton acceptor) is an active-site residue. Position 257 (arginine 257) interacts with NADPH. 2 residues coordinate NADPH: valine 281 and glutamate 283.

The protein belongs to the NAD-dependent glycerol-3-phosphate dehydrogenase family.

The protein localises to the cytoplasm. It carries out the reaction sn-glycerol 3-phosphate + NAD(+) = dihydroxyacetone phosphate + NADH + H(+). The catalysed reaction is sn-glycerol 3-phosphate + NADP(+) = dihydroxyacetone phosphate + NADPH + H(+). Its pathway is membrane lipid metabolism; glycerophospholipid metabolism. Its function is as follows. Catalyzes the reduction of the glycolytic intermediate dihydroxyacetone phosphate (DHAP) to sn-glycerol 3-phosphate (G3P), the key precursor for phospholipid synthesis. The polypeptide is Glycerol-3-phosphate dehydrogenase [NAD(P)+] (Pelotomaculum thermopropionicum (strain DSM 13744 / JCM 10971 / SI)).